We begin with the raw amino-acid sequence, 188 residues long: Heparin-binding hemagglutinin homolog (188 aa).

The tract at residues 162–188 is disordered; sequence KAAAPARKAPAKKAPAKKAPAKKVTQK. Over residues 170 to 188 the composition is skewed to basic residues; the sequence is APAKKAPAKKAPAKKVTQK.

This sequence to M.tuberculosis HbhA.

In terms of biological role, might mediate adherence to host cells by binding sulfated glycoconjugates. The chain is Heparin-binding hemagglutinin homolog (hbhA) from Mycobacterium leprae (strain TN).